Reading from the N-terminus, the 325-residue chain is ADP-ribose glycohydrolase MACROD1 (325 aa).

Residues 21–55 are disordered; the sequence is LGAPRPWPGPSPGATRTRSSACGPPASLSAHHPRA. Residues Lys-96, Lys-103, and Lys-129 each carry the N6-succinyllysine modification. Lys-138 is covalently cross-linked (Glycyl lysine isopeptide (Lys-Gly) (interchain with G-Cter in SUMO2)). A Macro domain is found at 141 to 322; that stretch reads EPKYKKDKQL…IYRERLPHYF (182 aa). Residue 159 to 161 coordinates substrate; sequence GDI. Position 163 is an N6-acetyllysine (Lys-163). Substrate is bound by residues 172–174, 179–184, 267–273, and Phe-306; these read AAN, GGGGVD, and ISTGVFG.

Belongs to the MacroD-type family. MacroD1/2-like subfamily. Interacts with ESR1; Interacts in a manner that is estrogen independent but is enhanced by estrogen. Interacts (via macro domain) with AR.

Its subcellular location is the nucleus. The enzyme catalyses 3''-O-acetyl-ADP-D-ribose + H2O = ADP-D-ribose + acetate + H(+). It catalyses the reaction 2''-O-acetyl-ADP-D-ribose + H2O = ADP-D-ribose + acetate + H(+). The catalysed reaction is 4-O-(ADP-D-ribosyl)-L-aspartyl-[protein] + H2O = L-aspartyl-[protein] + ADP-D-ribose + H(+). It carries out the reaction 5-O-(ADP-D-ribosyl)-L-glutamyl-[protein] + H2O = L-glutamyl-[protein] + ADP-D-ribose + H(+). The enzyme catalyses alpha-NAD(+) + H2O = ADP-D-ribose + nicotinamide + H(+). Its activity is regulated as follows. Subject to competitive inhibition by the product ADP-ribose. Removes ADP-ribose from aspartate and glutamate residues in proteins bearing a single ADP-ribose moiety. Inactive towards proteins bearing poly-ADP-ribose. Deacetylates O-acetyl-ADP ribose, a signaling molecule generated by the deacetylation of acetylated lysine residues in histones and other proteins. Plays a role in estrogen signaling. Binds to androgen receptor (AR) and amplifies the transactivation function of AR in response to androgen. May play an important role in carcinogenesis and/or progression of hormone-dependent cancers by feed-forward mechanism that activates ESR1 transactivation. Could be an ESR1 coactivator, providing a positive feedback regulatory loop for ESR1 signal transduction. Could be involved in invasive growth by down-regulating CDH1 in endometrial cancer cells. Enhances ESR1-mediated transcription activity. This Bos taurus (Bovine) protein is ADP-ribose glycohydrolase MACROD1 (MACROD1).